We begin with the raw amino-acid sequence, 425 residues long: 5-nitroanthranilic acid aminohydrolase (425 aa).

Residue Asp88 is part of the active site. Glu158 functions as the Proton acceptor in the catalytic mechanism.

It belongs to the peptidase M20A family. Co(2+) is required as a cofactor. The cofactor is Mn(2+). Requires Zn(2+) as cofactor. Fe(2+) serves as cofactor. It depends on Ni(2+) as a cofactor.

The enzyme catalyses 5-nitroanthranilate + H2O + H(+) = 5-nitrosalicylate + NH4(+). Its function is as follows. Catalyzes the deamination of 5-nitroanthranilate (5NAA) to 5-nitrosalicylate (5NSA), the first step in biodegradation of 5-nitroanthranilate. This is 5-nitroanthranilic acid aminohydrolase (naaA) from Bradyrhizobium sp.